The sequence spans 152 residues: Endoribonuclease YbeY (152 aa).

Residues H117, H121, and H127 each contribute to the Zn(2+) site.

It belongs to the endoribonuclease YbeY family. Zn(2+) serves as cofactor.

The protein localises to the cytoplasm. Single strand-specific metallo-endoribonuclease involved in late-stage 70S ribosome quality control and in maturation of the 3' terminus of the 16S rRNA. The chain is Endoribonuclease YbeY from Borreliella afzelii (strain PKo) (Borrelia afzelii).